The following is a 368-amino-acid chain: Zinc finger protein 24 (368 aa).

A Glycyl lysine isopeptide (Lys-Gly) (interchain with G-Cter in SUMO2) cross-link involves residue K22. Residue K27 forms a Glycyl lysine isopeptide (Lys-Gly) (interchain with G-Cter in SUMO1); alternate linkage. K27 is covalently cross-linked (Glycyl lysine isopeptide (Lys-Gly) (interchain with G-Cter in SUMO2); alternate). Residues 52–134 (RQRFRQFGYQ…TVLEDLESEL (83 aa)) enclose the SCAN box domain. Residues S132 and S142 each carry the phosphoserine modification. Residues K147, K177, and K236 each participate in a glycyl lysine isopeptide (Lys-Gly) (interchain with G-Cter in SUMO2) cross-link. The C2H2-type 1 zinc finger occupies 251–273 (HICDECGKHFSQGSALILHQRIH). The tract at residues 251–301 (HICDECGKHFSQGSALILHQRIHSGEKPYGCVECGKAFSRSSILVQHQRVH) is necessary and sufficient for nuclear localization. Position 274 is a phosphoserine (S274). Glycyl lysine isopeptide (Lys-Gly) (interchain with G-Cter in SUMO2) cross-links involve residues K277 and K286. 3 C2H2-type zinc fingers span residues 279-301 (YGCVECGKAFSRSSILVQHQRVH), 307-329 (YKCLECGKAFSQNSGLINHQRIH), and 335-357 (YECVQCGKSYSQSSNLFRHXXRH). A Phosphoserine modification is found at S292. Position 335 is a phosphotyrosine (Y335). Residues K361 and K367 each participate in a glycyl lysine isopeptide (Lys-Gly) (interchain with G-Cter in SUMO2) cross-link.

This sequence belongs to the krueppel C2H2-type zinc-finger protein family. Sumoylated.

It localises to the nucleus. Functionally, transcription factor required for myelination of differentiated oligodendrocytes. Required for the conversion of oligodendrocytes from the premyelinating to the myelinating state. In the developing central nervous system (CNS), involved in the maintenance in the progenitor stage by promoting the cell cycle. Specifically binds to the 5'-TCAT-3' DNA sequence. Has transcription repressor activity in vitro. This Pan troglodytes (Chimpanzee) protein is Zinc finger protein 24 (ZNF24).